An 863-amino-acid polypeptide reads, in one-letter code: Glycogen phosphorylase (863 aa).

Residue lysine 618 is modified to N6-(pyridoxal phosphate)lysine.

Belongs to the glycogen phosphorylase family. It depends on pyridoxal 5'-phosphate as a cofactor.

The catalysed reaction is [(1-&gt;4)-alpha-D-glucosyl](n) + phosphate = [(1-&gt;4)-alpha-D-glucosyl](n-1) + alpha-D-glucose 1-phosphate. Its function is as follows. Phosphorylase is an important allosteric enzyme in carbohydrate metabolism. Enzymes from different sources differ in their regulatory mechanisms and in their natural substrates. However, all known phosphorylases share catalytic and structural properties. The protein is Glycogen phosphorylase (glgP) of Mycobacterium tuberculosis (strain ATCC 25618 / H37Rv).